Here is a 103-residue protein sequence, read N- to C-terminus: UPF0102 protein aq_041 (103 aa).

Belongs to the UPF0102 family.

The sequence is that of UPF0102 protein aq_041 from Aquifex aeolicus (strain VF5).